The chain runs to 155 residues: Endoribonuclease YbeY (155 aa).

Zn(2+) contacts are provided by His-113, His-117, and His-123.

This sequence belongs to the endoribonuclease YbeY family. Requires Zn(2+) as cofactor.

It is found in the cytoplasm. Its function is as follows. Single strand-specific metallo-endoribonuclease involved in late-stage 70S ribosome quality control and in maturation of the 3' terminus of the 16S rRNA. The protein is Endoribonuclease YbeY of Ureaplasma urealyticum serovar 10 (strain ATCC 33699 / Western).